A 93-amino-acid chain; its full sequence is Small ribosomal subunit protein uS19 (93 aa).

The protein belongs to the universal ribosomal protein uS19 family.

In terms of biological role, protein S19 forms a complex with S13 that binds strongly to the 16S ribosomal RNA. This chain is Small ribosomal subunit protein uS19, found in Kocuria rhizophila (strain ATCC 9341 / DSM 348 / NBRC 103217 / DC2201).